The following is a 1870-amino-acid chain: MTPSASPSPSPNPGDANVKVDADSPNDFILFSHELPSGDIQDLIRRLHRYGTLPGYPHLARFLQECALLLRTEIQKLPRALRDSVPPFHDVVTLASHWDRLKSGPLSGAWDGPFLCLYEIAMLIGHHETHQLSYRRPACLVGISVGLFSAAAVAVSKSISDLVSYGAESVRTAFAFCVHVQRVSQELEPTMTEQAASVSWATVVIGVPADTIQVELDRFNHLKESESPGANARPLTGVSISHVDQTSVGVTGPPSRLKQLFRQSELLRSSRHSALPISGGLCHVPNVYDDEDVRAILEMAEVWEKWGTRALQVPLISPFTGSPFLCPDAYHLIEAICTEALTKQLYFDKLAGGVVTQLNGLSCQVLHYGASLMSDTIIDDVTSQLSPCDTARQCLVDWALRDAFDQLPGGPTPPRDAKLAVVGMACRMPGGADTPDHFWELLMNGVDTHTTVPPDRFDLDAHFDPSGEKENTTTKGSQSNRPLSRQAEQTDPMQRLALVTAYEALEMAGFVPNRTPSSHLSRVGTYYGQASDDYREVNAGQKIGTYGIPGTERGFGNGRINYFFNFQGPSFNIDTACSSGLAAVQAACSALWAGEADTVVAGGLNVITSPDIYCMLSKGHFLSKTGQCKVWDIGADGYCRADGIGSVVIKRLDDALADNDVILACISAGATNHSAESISITQPHAAAQRENYRQVMDRAGVSPLDVSFVELHGTGTQVGDAVESESVLSFFAPLGRRSHPDKRLHLGAVKSNIGHGEAAAGIASLIKVLLMYRNNTIPRHIGIRTAMNPVVAQHLANRNAGILSENHPWLAATASKKRYAIVNSFGAHGGNTTLLLEDAPSQHSQRYKNHSRRVVASSEVVCTSAKSKASLRANIRALLAYLDTHQETDLRDLAYTTSARRMHHHIRIASSVTSTAQLRSFLQAAADDVDAYAKHIATATKRTAVFAFSGQGCLYHGAAAHLFEQAPLFRNQVLQLDRIVRRLGFPSILVTVAGDAASVYDSARCPHRESTPSSDASHDSNTNRTSTAPAVDSPLIAQLALVVIQIALVQYWGLLGIKPSVVIGHSLGEYAALVAASVLSVADALFLVGKRAELMLAVCEPGSHAMLSVRGASVDRIEELCRESEKRYPFEVSCVNGLTDLVVTGLRGDMASLRDLLQGSGLKCVLLDIPFAFHSKQMSPILEDFENAAQQITFQEPAVPVISPLLGKCISEANVINGKYLARATREPVDFVAALDSAWADGTVNDKSIWIDIGPHPVCTSFASNHYGKAATQSFASLRRGDETLSTLTATLAALHCLGLPVDWNEYYDLRENPARLLHLDSYQWNYKNYWIPYEGSWTLDKAHAGQNNKTKDDNSAVTPAFFTSSVQQIIFEEYDESMGRMEALSDLHHPDLQGAADGHKIHGRSVVTGSIWADITLTVGEYLYKQMVPGGKMPHMNVKGMEVLEAQVLHPDMSQFIQIEGVLDLPRQQTAVRLYAASANGTRNTDKPFASATVCYEEAQDWQDQWQMTSHLVAARANSFWEMAAGGSDDNARPAGKGGPRVNNFFRSIAYQLFANVVDYGARYRGMQRVALSEDTLEATADIVLDKDRHGTWHTPPHWIDSAFQLAGFVMNSFGVQGDGKISGSSRDFFYITPGWRHFRLLERLEPGPEATYRSFVRMFPVGSEPGAYSGDIYLHRGKRLVGVCAGIKFKAVPRALMPVLFPRIEPQAGKRRNQAQTAENRLVKGKGNCEYTHTVFQEPKSRTPAYDVTKSQPHAEHCDISISQKTQPVAAVPVTQPALPAKERGEQNQGQSQSQNAQATACLSLISDETGLDLDDLTGEAAFADLGVDSLMSLALSAKIRAELGIDVQSSIFLECPTVQDLVTWLSK.

The tract at residues 40–279 (IQDLIRRLHR…SRHSALPISG (240 aa)) is N-terminal acylcarrier protein transacylase domain (SAT). One can recognise a Ketosynthase family 3 (KS3) domain in the interval 416–838 (DAKLAVVGMA…GGNTTLLLED (423 aa)). Positions 453–492 (PPDRFDLDAHFDPSGEKENTTTKGSQSNRPLSRQAEQTDP) are disordered. Residues 455 to 472 (DRFDLDAHFDPSGEKENT) show a composition bias toward basic and acidic residues. Residues 473-492 (TTKGSQSNRPLSRQAEQTDP) are compositionally biased toward polar residues. Residues Cys577, His712, and His755 each act as for beta-ketoacyl synthase activity in the active site. Residues 947–1282 (AFSGQGCLYH…QSFASLRRGD (336 aa)) form a malonyl-CoA:ACP transacylase (MAT) domain region. A disordered region spans residues 1004-1027 (RCPHRESTPSSDASHDSNTNRTST). The segment covering 1011-1027 (TPSSDASHDSNTNRTST) has biased composition (polar residues). The tract at residues 1364–1704 (TSSVQQIIFE…PRALMPVLFP (341 aa)) is product template (PT) domain. Residues 1368–1502 (QQIIFEEYDE…ATVCYEEAQD (135 aa)) are N-terminal hotdog fold. The 333-residue stretch at 1368-1700 (QQIIFEEYDE…FKAVPRALMP (333 aa)) folds into the PKS/mFAS DH domain. The active-site Proton acceptor; for dehydratase activity is the His1400. Residues 1538 to 1700 (KGGPRVNNFF…FKAVPRALMP (163 aa)) form a C-terminal hotdog fold region. The active-site Proton donor; for dehydratase activity is the Asp1602. The region spanning 1795–1870 (QSQNAQATAC…VQDLVTWLSK (76 aa)) is the Carrier domain. O-(pantetheine 4'-phosphoryl)serine is present on Ser1832.

Pantetheine 4'-phosphate serves as cofactor.

The catalysed reaction is holo-[ACP] + 6 malonyl-CoA + acetyl-CoA + 6 H(+) = 3,5,7,9,11,13-hexaoxotetradecanoyl-[ACP] + 6 CO2 + 7 CoA. It carries out the reaction holo-[ACP] + 5 malonyl-CoA + acetyl-CoA + 5 H(+) = 3,5,7,9,11-pentaoxododecanoyl-[ACP] + 5 CO2 + 6 CoA. Its pathway is secondary metabolite biosynthesis. Functionally, non-reducing polyketide synthase; part of the pkg gene cluster that mediates the biosynthesis of dihydrocitreoisocoumarin and 6,8-dihydroxy-3-(2-oxopropyl)-isocoumarin. The non-reducing polyketide synthase pkgA performs the condensation of one acetyl-CoA starter unit with 6 and 5 malonyl-CoA units, respectively. As pkgA lacks a releasing domain, the thioesterase pkgB is necessary to break the thioester bond and release dihydrocitreoisocoumarin and 6,8-dihydroxy-3-(2-oxopropyl)-isocoumarin from pkgA. This Emericella nidulans (strain FGSC A4 / ATCC 38163 / CBS 112.46 / NRRL 194 / M139) (Aspergillus nidulans) protein is Non-reducing polyketide synthase pkgA.